A 126-amino-acid chain; its full sequence is Holo-[acyl-carrier-protein] synthase (126 aa).

Residues aspartate 9 and glutamate 58 each contribute to the Mg(2+) site.

It belongs to the P-Pant transferase superfamily. AcpS family. It depends on Mg(2+) as a cofactor.

It localises to the cytoplasm. The catalysed reaction is apo-[ACP] + CoA = holo-[ACP] + adenosine 3',5'-bisphosphate + H(+). Its function is as follows. Transfers the 4'-phosphopantetheine moiety from coenzyme A to a Ser of acyl-carrier-protein. In Salmonella newport (strain SL254), this protein is Holo-[acyl-carrier-protein] synthase.